The sequence spans 494 residues: UPF0371 protein SP_0341 (494 aa).

The protein belongs to the UPF0371 family.

In Streptococcus pneumoniae serotype 4 (strain ATCC BAA-334 / TIGR4), this protein is UPF0371 protein SP_0341.